The primary structure comprises 103 residues: Small ribosomal subunit protein uS10 (103 aa).

It belongs to the universal ribosomal protein uS10 family. Part of the 30S ribosomal subunit.

Its function is as follows. Involved in the binding of tRNA to the ribosomes. In Vibrio cholerae serotype O1 (strain ATCC 39541 / Classical Ogawa 395 / O395), this protein is Small ribosomal subunit protein uS10.